Consider the following 255-residue polypeptide: uncharacterized protein (255 aa).

Belongs to the IIV-6 155L family.

This is an uncharacterized protein from Acheta domesticus (House cricket).